Reading from the N-terminus, the 629-residue chain is tRNA uridine 5-carboxymethylaminomethyl modification enzyme MnmG (629 aa).

Residues 13–18 (GGGHAG), Val-125, and Ser-180 contribute to the FAD site. 273-287 (GPRYCPSIEDKVMRF) is a binding site for NAD(+). Position 370 (Gln-370) interacts with FAD.

The protein belongs to the MnmG family. As to quaternary structure, homodimer. Heterotetramer of two MnmE and two MnmG subunits. The cofactor is FAD.

It localises to the cytoplasm. Functionally, NAD-binding protein involved in the addition of a carboxymethylaminomethyl (cmnm) group at the wobble position (U34) of certain tRNAs, forming tRNA-cmnm(5)s(2)U34. The sequence is that of tRNA uridine 5-carboxymethylaminomethyl modification enzyme MnmG from Salmonella arizonae (strain ATCC BAA-731 / CDC346-86 / RSK2980).